We begin with the raw amino-acid sequence, 336 residues long: Holliday junction branch migration complex subunit RuvB (336 aa).

Residues 1–11 show a composition bias toward basic and acidic residues; it reads MDDDKLLSGDK. Residues 1 to 21 form a disordered region; the sequence is MDDDKLLSGDKADDEEASLEK. The large ATPase domain (RuvB-L) stretch occupies residues 1-184; the sequence is MDDDKLLSGD…FGIVEHMAYY (184 aa). ATP contacts are provided by residues L23, R24, G65, K68, T69, T70, 131-133, R174, Y184, and R221; that span reads EDF. T69 provides a ligand contact to Mg(2+). The small ATPAse domain (RuvB-S) stretch occupies residues 185-255; sequence EVADLEDIVK…IVARSLTYLR (71 aa). Residues 258–336 are head domain (RuvB-H); sequence DAGLDETDNK…HLGFPYPENK (79 aa). Residues R313 and R318 each coordinate DNA.

Belongs to the RuvB family. As to quaternary structure, homohexamer. Forms an RuvA(8)-RuvB(12)-Holliday junction (HJ) complex. HJ DNA is sandwiched between 2 RuvA tetramers; dsDNA enters through RuvA and exits via RuvB. An RuvB hexamer assembles on each DNA strand where it exits the tetramer. Each RuvB hexamer is contacted by two RuvA subunits (via domain III) on 2 adjacent RuvB subunits; this complex drives branch migration. In the full resolvosome a probable DNA-RuvA(4)-RuvB(12)-RuvC(2) complex forms which resolves the HJ.

It localises to the cytoplasm. The catalysed reaction is ATP + H2O = ADP + phosphate + H(+). In terms of biological role, the RuvA-RuvB-RuvC complex processes Holliday junction (HJ) DNA during genetic recombination and DNA repair, while the RuvA-RuvB complex plays an important role in the rescue of blocked DNA replication forks via replication fork reversal (RFR). RuvA specifically binds to HJ cruciform DNA, conferring on it an open structure. The RuvB hexamer acts as an ATP-dependent pump, pulling dsDNA into and through the RuvAB complex. RuvB forms 2 homohexamers on either side of HJ DNA bound by 1 or 2 RuvA tetramers; 4 subunits per hexamer contact DNA at a time. Coordinated motions by a converter formed by DNA-disengaged RuvB subunits stimulates ATP hydrolysis and nucleotide exchange. Immobilization of the converter enables RuvB to convert the ATP-contained energy into a lever motion, pulling 2 nucleotides of DNA out of the RuvA tetramer per ATP hydrolyzed, thus driving DNA branch migration. The RuvB motors rotate together with the DNA substrate, which together with the progressing nucleotide cycle form the mechanistic basis for DNA recombination by continuous HJ branch migration. Branch migration allows RuvC to scan DNA until it finds its consensus sequence, where it cleaves and resolves cruciform DNA. In Lactiplantibacillus plantarum (strain ATCC BAA-793 / NCIMB 8826 / WCFS1) (Lactobacillus plantarum), this protein is Holliday junction branch migration complex subunit RuvB.